The primary structure comprises 405 residues: Tryptophan synthase beta chain (405 aa).

At Lys98 the chain carries N6-(pyridoxal phosphate)lysine.

The protein belongs to the TrpB family. As to quaternary structure, tetramer of two alpha and two beta chains. The cofactor is pyridoxal 5'-phosphate.

The catalysed reaction is (1S,2R)-1-C-(indol-3-yl)glycerol 3-phosphate + L-serine = D-glyceraldehyde 3-phosphate + L-tryptophan + H2O. Its pathway is amino-acid biosynthesis; L-tryptophan biosynthesis; L-tryptophan from chorismate: step 5/5. In terms of biological role, the beta subunit is responsible for the synthesis of L-tryptophan from indole and L-serine. The protein is Tryptophan synthase beta chain of Afipia carboxidovorans (strain ATCC 49405 / DSM 1227 / KCTC 32145 / OM5) (Oligotropha carboxidovorans).